We begin with the raw amino-acid sequence, 158 residues long: Endoribonuclease YbeY (158 aa).

H119, H123, and H129 together coordinate Zn(2+).

It belongs to the endoribonuclease YbeY family. It depends on Zn(2+) as a cofactor.

It is found in the cytoplasm. In terms of biological role, single strand-specific metallo-endoribonuclease involved in late-stage 70S ribosome quality control and in maturation of the 3' terminus of the 16S rRNA. This is Endoribonuclease YbeY from Acinetobacter baumannii (strain SDF).